The primary structure comprises 377 residues: MTTRLYLSPTPPRNDREGASKSTSASIKHDAYLPPADGNRVLVDRFGRIARDLRVSLTDRCNLRCTYCMPAEGLEWLPTEQTLNDAEVLRLLHIAVVKLGIRQIRFTGGEPLLRKNLEDIIAGTAALRTDEGEKVHIALTTNGLGLDKRIAGLKEAGLDRVNISLDTIDAERYVSLTRRDRLSGVLASIDAAVAAGLHPVKINAVVMPGVNEVDIVPLAEYCISKGAQLRFIEQMPLGPREQWKRGDMVTAEEILARLEEKFTLSPAKEPRGAAPAALWNAVDKSNPVITGQIGIIASVTHPFCGDCDRSRLTTDGTIRNCLFSRTETPLRDALRDGASDDELAQLWAGAMWEKKPGHGIDDEGFLQPDRPMSAIGG.

The tract at residues 1–29 is disordered; the sequence is MTTRLYLSPTPPRNDREGASKSTSASIKH. The Radical SAM core domain maps to 45-271; that stretch reads RFGRIARDLR…FTLSPAKEPR (227 aa). Residue Arg54 participates in GTP binding. Cys61 and Cys65 together coordinate [4Fe-4S] cluster. S-adenosyl-L-methionine is bound at residue Tyr67. Cys68 is a [4Fe-4S] cluster binding site. Position 105 (Arg105) interacts with GTP. Gly109 contacts S-adenosyl-L-methionine. Thr140 is a GTP binding site. Ser164 provides a ligand contact to S-adenosyl-L-methionine. Lys201 lines the GTP pocket. Residue Met235 coordinates S-adenosyl-L-methionine. [4Fe-4S] cluster contacts are provided by Cys304 and Cys307. GTP is bound at residue 309 to 311; that stretch reads RSR. Cys321 serves as a coordination point for [4Fe-4S] cluster.

The protein belongs to the radical SAM superfamily. MoaA family. Monomer and homodimer. It depends on [4Fe-4S] cluster as a cofactor.

The enzyme catalyses GTP + AH2 + S-adenosyl-L-methionine = (8S)-3',8-cyclo-7,8-dihydroguanosine 5'-triphosphate + 5'-deoxyadenosine + L-methionine + A + H(+). The protein operates within cofactor biosynthesis; molybdopterin biosynthesis. In terms of biological role, catalyzes the cyclization of GTP to (8S)-3',8-cyclo-7,8-dihydroguanosine 5'-triphosphate. The sequence is that of GTP 3',8-cyclase from Corynebacterium glutamicum (strain R).